A 120-amino-acid polypeptide reads, in one-letter code: uncharacterized protein (120 aa).

The helical transmembrane segment at 8–28 (LIVKWFVGLMLIMMMVAVSLF) threads the bilayer.

Its subcellular location is the membrane. This is an uncharacterized protein from Bacillus anthracis.